The primary structure comprises 178 residues: Single-stranded DNA-binding protein 2 (178 aa).

Positions 6–111 (VNKVILVGNL…VVVSQSGTMQ (106 aa)) constitute an SSB domain. A DNA-binding region spans residues 55-61 (WHRVVLY). The interval 111 to 161 (QMLGGRNSAGSGQQQGGWGQPQQPAAPSHSGMPPQQHPANEPPMDFDDDIP) is disordered.

In terms of assembly, homotetramer.

The polypeptide is Single-stranded DNA-binding protein 2 (ssb2) (Salmonella typhi).